The primary structure comprises 245 residues: tRNA (guanine-N(1)-)-methyltransferase (245 aa).

Residues G111 and 131–136 (MGDYVL) contribute to the S-adenosyl-L-methionine site.

Belongs to the RNA methyltransferase TrmD family. As to quaternary structure, homodimer.

The protein localises to the cytoplasm. It carries out the reaction guanosine(37) in tRNA + S-adenosyl-L-methionine = N(1)-methylguanosine(37) in tRNA + S-adenosyl-L-homocysteine + H(+). Specifically methylates guanosine-37 in various tRNAs. The protein is tRNA (guanine-N(1)-)-methyltransferase of Staphylococcus aureus (strain USA300).